Consider the following 346-residue polypeptide: Cyclin-dependent kinase 20 (346 aa).

A Protein kinase domain is found at 4–288; that stretch reads YCILGRIGEG…ASKALLHQYF (285 aa). Residues 10–18 and Lys-33 each bind ATP; that span reads IGEGAHGIV. Asp-127 (proton acceptor) is an active-site residue.

This sequence belongs to the protein kinase superfamily. CMGC Ser/Thr protein kinase family. CDC2/CDKX subfamily. In terms of assembly, monomer. Interacts with TBC1D32. Interacts with MAK.

It localises to the nucleus. The protein resides in the cytoplasm. Its subcellular location is the cell projection. It is found in the cilium. It catalyses the reaction L-seryl-[protein] + ATP = O-phospho-L-seryl-[protein] + ADP + H(+). The enzyme catalyses L-threonyl-[protein] + ATP = O-phospho-L-threonyl-[protein] + ADP + H(+). Its function is as follows. Required for high-level Shh responses in the developing neural tube. Together with TBC1D32, controls the structure of the primary cilium by coordinating assembly of the ciliary membrane and axoneme, allowing GLI2 to be properly activated in response to SHH signaling. Involved in cell growth. Activates CDK2, a kinase involved in the control of the cell cycle, by phosphorylating residue 'Thr-160'. The protein is Cyclin-dependent kinase 20 (CDK20) of Homo sapiens (Human).